The sequence spans 103 residues: Small ribosomal subunit protein uS10 (103 aa).

This sequence belongs to the universal ribosomal protein uS10 family. Part of the 30S ribosomal subunit.

Functionally, involved in the binding of tRNA to the ribosomes. The polypeptide is Small ribosomal subunit protein uS10 (Cutibacterium acnes (strain DSM 16379 / KPA171202) (Propionibacterium acnes)).